Here is a 326-residue protein sequence, read N- to C-terminus: Protease HtpX homolog (326 aa).

The next 2 membrane-spanning stretches (helical) occupy residues 10-30 (LNMALATLGIVLLGFALALAV) and 41-61 (VGLMLSILMFIFFLNIIQWLF). His-147 contributes to the Zn(2+) binding site. Residue Glu-148 is part of the active site. His-151 is a binding site for Zn(2+). 2 consecutive transmembrane segments (helical) span residues 159-179 (LLMAVGLIPALIYYLGWWIFW) and 197-217 (LLFLIGIAMMAVSFVFQLLVL). Glu-224 is a Zn(2+) binding site.

This sequence belongs to the peptidase M48B family. It depends on Zn(2+) as a cofactor.

The protein localises to the cell membrane. The protein is Protease HtpX homolog of Saccharolobus islandicus (strain Y.N.15.51 / Yellowstone #2) (Sulfolobus islandicus).